We begin with the raw amino-acid sequence, 308 residues long: Transcriptional adapter 1-1 (308 aa).

It belongs to the TADA1 family. In terms of assembly, component of the Spt-Ada-Gcn5 acetyltransferase (SAGA) complex consisting of wda/Taf5L, Saf6, Taf9, Taf10b, Taf12, Ada1, Spt3, Spt7, Spt20, Sf3b3, Sf3b5, Nipped-A/Tra1, a histone acetyltransferase (HAT) module made up of Gcn5, Ada2b (Isoform B), Ada3 and Sgf29, and a deubiquitinase (DUB) module made up of not/nonstop, Sgf11 and e(y)2 tethered to SAGA by Atxn7. Not a component of the Ada2a-containing ATAC complex.

The protein localises to the nucleus. Its function is as follows. Component of the transcription regulatory complex SAGA, a multiprotein complex that activates transcription by remodeling chromatin and mediating histone acetylation and deubiquitination. The SAGA complex predominantly acetylates histone H3. The chain is Transcriptional adapter 1-1 from Drosophila melanogaster (Fruit fly).